Reading from the N-terminus, the 404-residue chain is uncharacterized protein (404 aa).

[4Fe-4S] cluster is bound by residues Cys-69, Cys-75, Cys-78, and Cys-166. Positions 226, 253, 274, and 334 each coordinate S-adenosyl-L-methionine. Catalysis depends on Cys-361, which acts as the Nucleophile.

It belongs to the class I-like SAM-binding methyltransferase superfamily. RNA M5U methyltransferase family.

This is an uncharacterized protein from Treponema denticola (strain ATCC 35405 / DSM 14222 / CIP 103919 / JCM 8153 / KCTC 15104).